A 222-amino-acid chain; its full sequence is Tegument protein UL26 (222 aa).

This sequence belongs to the herpesviridae US22 family. In terms of assembly, interacts with UL25. Interacts with ISGylation machinery components ISG15, UBA7 and HERC5; these interactions inhibit global protein ISGylation. In terms of processing, ISGylated; ISGylation regulates UL26 stability and inhibits its activities to suppress NF-kappa-B signaling.

Its subcellular location is the virion tegument. The protein localises to the host nucleus. Functionally, plays a role in the inhibition of host NF-kappa-B. This inhibition affects both the canonical and the non-canonical pathways. Blocks the induction of host IKK phosphorylation. May also influence the normal phosphorylation state of several tegument proteins including pp28 in virions. Also suppresses virus-induced ISGylation independent of its own ISGylation. The sequence is that of Tegument protein UL26 (UL26) from Homo sapiens (Human).